The primary structure comprises 311 residues: HPr kinase/phosphorylase (311 aa).

Residues histidine 138 and lysine 159 contribute to the active site. 153-160 (GDSGIGKS) is a binding site for ATP. A Mg(2+)-binding site is contributed by serine 160. The Proton acceptor; for phosphorylation activity. Proton donor; for dephosphorylation activity role is filled by aspartate 177. The segment at 201–210 (LEIRGVGIID) is important for the catalytic mechanism of both phosphorylation and dephosphorylation. Glutamate 202 provides a ligand contact to Mg(2+). Arginine 243 is a catalytic residue. The tract at residues 264-269 (PVKTGR) is important for the catalytic mechanism of dephosphorylation.

This sequence belongs to the HPrK/P family. Homohexamer. Requires Mg(2+) as cofactor.

The enzyme catalyses [HPr protein]-L-serine + ATP = [HPr protein]-O-phospho-L-serine + ADP + H(+). It carries out the reaction [HPr protein]-O-phospho-L-serine + phosphate + H(+) = [HPr protein]-L-serine + diphosphate. Catalyzes the ATP- as well as the pyrophosphate-dependent phosphorylation of a specific serine residue in HPr, a phosphocarrier protein of the phosphoenolpyruvate-dependent sugar phosphotransferase system (PTS). HprK/P also catalyzes the pyrophosphate-producing, inorganic phosphate-dependent dephosphorylation (phosphorolysis) of seryl-phosphorylated HPr (P-Ser-HPr). The two antagonistic activities of HprK/P are regulated by several intracellular metabolites, which change their concentration in response to the absence or presence of rapidly metabolisable carbon sources (glucose, fructose, etc.) in the growth medium. Therefore, by controlling the phosphorylation state of HPr, HPrK/P is a sensor enzyme that plays a major role in the regulation of carbon metabolism and sugar transport: it mediates carbon catabolite repression (CCR), and regulates PTS-catalyzed carbohydrate uptake and inducer exclusion. This is HPr kinase/phosphorylase from Streptococcus sanguinis (strain SK36).